The primary structure comprises 24 residues: U1-poneritoxin-Ni2a (24 aa).

It belongs to the ponericin-L family. In terms of tissue distribution, expressed by the venom gland.

It is found in the secreted. Has a broad spectrum of activity against both Gram-positive and Gram-negative bacteria. Is inactive against yeast, erythrocytes, and insects. This is U1-poneritoxin-Ni2a from Neoponera inversa (Ant).